Consider the following 253-residue polypeptide: Large ribosomal subunit protein uL2C (253 aa).

This sequence belongs to the universal ribosomal protein uL2 family. As to quaternary structure, component of the large ribosomal subunit (LSU). Mature yeast ribosomes consist of a small (40S) and a large (60S) subunit. The 40S small subunit contains 1 molecule of ribosomal RNA (18S rRNA) and at least 33 different proteins. The large 60S subunit contains 3 rRNA molecules (25S, 5.8S and 5S rRNA) and at least 46 different proteins.

It localises to the cytoplasm. Its subcellular location is the nucleus. In terms of biological role, component of the ribosome, a large ribonucleoprotein complex responsible for the synthesis of proteins in the cell. The small ribosomal subunit (SSU) binds messenger RNAs (mRNAs) and translates the encoded message by selecting cognate aminoacyl-transfer RNA (tRNA) molecules. The large subunit (LSU) contains the ribosomal catalytic site termed the peptidyl transferase center (PTC), which catalyzes the formation of peptide bonds, thereby polymerizing the amino acids delivered by tRNAs into a polypeptide chain. The nascent polypeptides leave the ribosome through a tunnel in the LSU and interact with protein factors that function in enzymatic processing, targeting, and the membrane insertion of nascent chains at the exit of the ribosomal tunnel. The polypeptide is Large ribosomal subunit protein uL2C (rpl803) (Schizosaccharomyces pombe (strain 972 / ATCC 24843) (Fission yeast)).